The following is a 116-amino-acid chain: NADH-ubiquinone oxidoreductase chain 3 (116 aa).

Helical transmembrane passes span 10 to 30 (FLTLFVSILIFLITTLITFAA), 64 to 84 (FFLVAILFLLFDLEIALLFPL), and 88 to 108 (VFFHPIHTPLILTVGLIFEWV).

This sequence belongs to the complex I subunit 3 family.

It is found in the mitochondrion membrane. The catalysed reaction is a ubiquinone + NADH + 5 H(+)(in) = a ubiquinol + NAD(+) + 4 H(+)(out). In terms of biological role, core subunit of the mitochondrial membrane respiratory chain NADH dehydrogenase (Complex I) that is believed to belong to the minimal assembly required for catalysis. Complex I functions in the transfer of electrons from NADH to the respiratory chain. The immediate electron acceptor for the enzyme is believed to be ubiquinone. The chain is NADH-ubiquinone oxidoreductase chain 3 (ND3) from Patiria pectinifera (Starfish).